We begin with the raw amino-acid sequence, 709 residues long: Cell adhesion molecule CEACAM3 (709 aa).

A signal peptide spans 1-34; it reads MELSSVLPCKRCTPWRGLLLTASLLTCWLLPTTA. 5 consecutive Ig-like V-type domains span residues 35–142, 155–262, 275–382, 393–500, and 509–616; these read QVSI…HVYF, QLSI…QVDT, QLTV…QVNT, LLTI…SVHT, and QLVI…HIYK. 16 N-linked (GlcNAc...) asparagine glycosylation sites follow: Asn73, Asn86, Asn103, Asn110, Asn133, Asn207, Asn224, Asn231, Asn327, Asn344, Asn351, Asn381, Asn462, Asn561, Asn578, and Asn585. In terms of domain architecture, Ig-like C2-type spans 631 to 695; sequence RVKSSVVLTC…YRCEVSNPVS (65 aa).

This sequence belongs to the immunoglobulin superfamily. CEA family. As to expression, expression detected only in placenta.

Its function is as follows. Possibly involved in cell adhesion. This Rattus norvegicus (Rat) protein is Cell adhesion molecule CEACAM3.